We begin with the raw amino-acid sequence, 86 residues long: MGRKDAATIKLPVDQYRKQIGKQDYKKTKPILRATKLKAEAKKTAIGIKEVGLVLAAILALLLAFYAFFYLRLTTDDDPDLDQDED.

Residues 51 to 71 (VGLVLAAILALLLAFYAFFYL) form a helical membrane-spanning segment.

Belongs to the TRIQK family.

Its subcellular location is the endoplasmic reticulum membrane. May play a role in cell growth and maintenance of cell morphology. This is Triple QxxK/R motif-containing protein (TRIQK) from Pongo abelii (Sumatran orangutan).